A 158-amino-acid chain; its full sequence is 6,7-dimethyl-8-ribityllumazine synthase (158 aa).

5-amino-6-(D-ribitylamino)uracil contacts are provided by residues phenylalanine 23, serine 61–glutamate 63, and alanine 85–isoleucine 87. Glutamate 90–threonine 91 provides a ligand contact to (2S)-2-hydroxy-3-oxobutyl phosphate. The Proton donor role is filled by histidine 93. Phenylalanine 118 provides a ligand contact to 5-amino-6-(D-ribitylamino)uracil. Arginine 132 provides a ligand contact to (2S)-2-hydroxy-3-oxobutyl phosphate.

Belongs to the DMRL synthase family.

It carries out the reaction (2S)-2-hydroxy-3-oxobutyl phosphate + 5-amino-6-(D-ribitylamino)uracil = 6,7-dimethyl-8-(1-D-ribityl)lumazine + phosphate + 2 H2O + H(+). It functions in the pathway cofactor biosynthesis; riboflavin biosynthesis; riboflavin from 2-hydroxy-3-oxobutyl phosphate and 5-amino-6-(D-ribitylamino)uracil: step 1/2. Functionally, catalyzes the formation of 6,7-dimethyl-8-ribityllumazine by condensation of 5-amino-6-(D-ribitylamino)uracil with 3,4-dihydroxy-2-butanone 4-phosphate. This is the penultimate step in the biosynthesis of riboflavin. This chain is 6,7-dimethyl-8-ribityllumazine synthase, found in Prochlorococcus marinus (strain MIT 9312).